The following is a 438-amino-acid chain: Coenzyme A disulfide reductase (438 aa).

8 to 33 (GAVAGGATCASQIRRLDKESDIIIFE) is a binding site for FAD. Substrate is bound by residues Thr15, Gln19, Arg22, Ser39, and Asn42. Catalysis depends on Cys43, which acts as the Nucleophile. The Redox-active role is filled by Cys43. Lys71 is a binding site for substrate. 151-166 (VLVVGAGYVSLEVLEN) is an NADP(+) binding site. 267–277 (TNVPNIYAIGD) provides a ligand contact to FAD. His299 provides a ligand contact to substrate. FAD is bound at residue Tyr419. Lys427 lines the substrate pocket.

It belongs to the class-III pyridine nucleotide-disulfide oxidoreductase family. In terms of assembly, homodimer. FAD is required as a cofactor.

The enzyme catalyses NADP(+) + 2 CoA = CoA-disulfide + NADPH + H(+). Catalyzes specifically the NADPH-dependent reduction of coenzyme A disulfide. This Staphylococcus aureus (strain USA300) protein is Coenzyme A disulfide reductase.